The sequence spans 501 residues: MSTLGDLLAEHTVLPGSAVDHLHAVVGEWQLLADLSFADYLMWVRRDDGVLVCVAQCRPNTGPTVVHTDAVGTVVAANSMPLVAATFSGGVPGREGAVGQQNSCQHDGHSVEVSPVRFGDQVVAVLTRHQPELAARRRSGHLETAYRLCATDLLRMLAEGTFPDAGDVAMSRSSPRAGDGFIRLDVDGVVSYASPNALSAYHRMGLTTELEGVNLIDATRPLISDPFEAHEVDEHVQDLLAGDGKGMRMEVDAGGATVLLRTLPLVVAGRNVGAAILIRDVTEVKRRDRALISKDATIREIHHRVKNNLQTVAALLRLQARRTSNAEGREALIESVRRVSSIALVHDALSMSVDEQVNLDEVIDRILPIMNDVASVDRPIRINRVGDLGVLDSDRATALIMVITELVQNAIEHAFDPAAAEGSVTIRAERSARWLDVVVHDDGLGLPQGFSLEKSDSLGLQIVRTLVSAELDGSLGMRDARERGTDVVLRVPVGRRGRLML.

The interval Leu-4–Ala-150 is GAF. A PAS-like region spans residues Asp-179–Leu-291. The region spanning Glu-300–Arg-495 is the Histidine kinase domain. The residue at position 303 (His-303) is a Phosphohistidine; by autocatalysis.

In terms of processing, autophosphorylated.

Its subcellular location is the cytoplasm. It carries out the reaction ATP + protein L-histidine = ADP + protein N-phospho-L-histidine.. Member of the two-component regulatory system PdtaR/PdtaS. This two-component system plays an essential role in mycobacterial adaptation to poor nutrient conditions. Nutrient deprivation results in increasing intracellular concentrations of cyclic diguanosine monophosphate (c-di-GMP), which binds to the PdtaS sensor and promotes its autophosphorylation, leading to the activation of the signaling cascade. The phosphate group is then transferred to PdtaR. In terms of biological role, in addition, the PdtaR/PdtaS two-component system controls copper and nitric oxide (NO) resistance downstream of the intramembrane protease Rip1. This coupled Rip1/PdtaS/PdtaR circuit controls NO resistance and acute lung infection in mice by relieving PdtaR/PdtaS-mediated repression of isonitrile chalkophore biosynthesis. Two signals are required to fully inactivate the PdtaR/PdtaS system and mediate NO resistance: a cytoplasmic inhibitory signal through the PdtaS kinase mediated by direct sensing of NO and the production of PPE1-5', an NO-induced small RNA, to sequester PdtaR. This chain is Sensor histidine kinase PdtaS (pdtaS), found in Mycobacterium tuberculosis (strain CDC 1551 / Oshkosh).